The primary structure comprises 358 residues: Peptide chain release factor 1 (358 aa).

An N5-methylglutamine modification is found at glutamine 233.

This sequence belongs to the prokaryotic/mitochondrial release factor family. In terms of processing, methylated by PrmC. Methylation increases the termination efficiency of RF1.

It is found in the cytoplasm. Functionally, peptide chain release factor 1 directs the termination of translation in response to the peptide chain termination codons UAG and UAA. The protein is Peptide chain release factor 1 of Staphylococcus saprophyticus subsp. saprophyticus (strain ATCC 15305 / DSM 20229 / NCIMB 8711 / NCTC 7292 / S-41).